Here is a 138-residue protein sequence, read N- to C-terminus: Transcriptional regulator MraZ (138 aa).

SpoVT-AbrB domains lie at 3–45 and 74–117; these read EFQH…PLAE and ATEC…AAER.

The protein belongs to the MraZ family. In terms of assembly, forms oligomers.

Its subcellular location is the cytoplasm. The protein localises to the nucleoid. This Symbiobacterium thermophilum (strain DSM 24528 / JCM 14929 / IAM 14863 / T) protein is Transcriptional regulator MraZ.